A 540-amino-acid polypeptide reads, in one-letter code: Chaperonin GroEL (540 aa).

ATP is bound by residues 29 to 32, 86 to 90, Gly-413, 476 to 478, and Asp-492; these read TLGP, DGTTT, and NAA.

Belongs to the chaperonin (HSP60) family. Forms a cylinder of 14 subunits composed of two heptameric rings stacked back-to-back. Interacts with the co-chaperonin GroES.

The protein localises to the cytoplasm. It catalyses the reaction ATP + H2O + a folded polypeptide = ADP + phosphate + an unfolded polypeptide.. In terms of biological role, together with its co-chaperonin GroES, plays an essential role in assisting protein folding. The GroEL-GroES system forms a nano-cage that allows encapsulation of the non-native substrate proteins and provides a physical environment optimized to promote and accelerate protein folding. The sequence is that of Chaperonin GroEL from Streptococcus anginosus.